The sequence spans 222 residues: Orotate phosphoribosyltransferase (222 aa).

Lysine 29 is a binding site for 5-phospho-alpha-D-ribose 1-diphosphate. Residue phenylalanine 37 to phenylalanine 38 coordinates orotate. 5-phospho-alpha-D-ribose 1-diphosphate-binding positions include tyrosine 75–lysine 76, arginine 101, lysine 102, lysine 105, histidine 107, and aspartate 126–serine 134. Residues serine 130 and arginine 158 each contribute to the orotate site.

Belongs to the purine/pyrimidine phosphoribosyltransferase family. PyrE subfamily. In terms of assembly, homodimer. It depends on Mg(2+) as a cofactor.

The catalysed reaction is orotidine 5'-phosphate + diphosphate = orotate + 5-phospho-alpha-D-ribose 1-diphosphate. The protein operates within pyrimidine metabolism; UMP biosynthesis via de novo pathway; UMP from orotate: step 1/2. Functionally, catalyzes the transfer of a ribosyl phosphate group from 5-phosphoribose 1-diphosphate to orotate, leading to the formation of orotidine monophosphate (OMP). This is Orotate phosphoribosyltransferase from Polynucleobacter necessarius subsp. necessarius (strain STIR1).